The primary structure comprises 390 residues: Probable inactive secreted aspartyl protease (390 aa).

A signal peptide spans 1–20; sequence MQLTIKALVGILTTISAATA. A propeptide spans 21 to 69 (removed in mature form); the sequence is VSFDMENLGAEKRGVSGEELHMLHGNEVLARFANGVYPEVANGTRVSKR. N-linked (GlcNAc...) asparagine glycosylation occurs at N62. The region spanning 86 to 388 is the Peptidase A1 domain; sequence WAVKAKIGSN…KFDSNEMQIA (303 aa). Active-site residues include D104 and D273. Residues C313 and C346 are joined by a disulfide bond.

Belongs to the peptidase A1 family.

Its subcellular location is the secreted. Probable inactive secreted aspartyl protease. May promote an inflammatory immune response in the host when the host skin barrier is breached. Has no detectable protease activity in vitro on fluorogenic substrates, a peptide library, or with the general protease substrate casein. The presence of the enzyme also does not affect the activity of the secreted aspartyl protease SAP1. The sequence is that of Probable inactive secreted aspartyl protease from Malassezia globosa (strain ATCC MYA-4612 / CBS 7966) (Dandruff-associated fungus).